The primary structure comprises 109 residues: Putative double-stranded DNA mimic protein KPK_2119 (109 aa).

It belongs to the putative dsDNA mimic protein family.

Functionally, may act as a double-stranded DNA (dsDNA) mimic. Probably regulates the activity of a dsDNA-binding protein. This is Putative double-stranded DNA mimic protein KPK_2119 from Klebsiella pneumoniae (strain 342).